A 261-amino-acid chain; its full sequence is Auxin-responsive protein IAA10 (261 aa).

The tract at residues 1–43 is disordered; it reads MNGLQEVCSSSGSVMIGLPAEEDENAAHSSEDSSCPDESVSET. The EAR-like (transcriptional repression) motif lies at 45–49; sequence LDLAL. A disordered region spans residues 62 to 90; it reads LSSSSSSLTRESGTKRSADSSPAAASNAT. Low complexity predominate over residues 80 to 89; it reads DSSPAAASNA. The region spanning 151–253 is the PB1 domain; the sequence is SMLVKVTMDG…SVTRLRIMKT (103 aa).

Belongs to the Aux/IAA family. As to quaternary structure, homodimers and heterodimers. In terms of tissue distribution, preferentially expressed in vegetative organs.

Its subcellular location is the nucleus. In terms of biological role, aux/IAA proteins are short-lived transcriptional factors that function as repressors of early auxin response genes at low auxin concentrations. Repression is thought to result from the interaction with auxin response factors (ARFs), proteins that bind to the auxin-responsive promoter element (AuxRE). Formation of heterodimers with ARF proteins may alter their ability to modulate early auxin response genes expression. The polypeptide is Auxin-responsive protein IAA10 (IAA10) (Arabidopsis thaliana (Mouse-ear cress)).